Consider the following 360-residue polypeptide: MTIKISIDCMGGDHGPSVTIPAAISFVESEPDAELILVGLEETLLAELKKHKASEHPRLSIVNATEVVTMDDPLEIALRRKKDSSMRVAINLVKQGNADACVSAGNTGALMAISRYVLKTLPGVNRPAICSILPNQKDGPTYMLDLGANVDCEPQHLHQFALMGSALVSAMEGNPRPTVGLLNVGEEDIKGNEVVKQTAVLLRADHELGRLNFYGNVEGNDIFKGTTDIVVCDGFVGNVTLKASEGLGRFVKSVLTTEFKSSPLNMLGALIARGALKAISQRMNPSRYNGGSLLGLRGLVFKSHGGADAYGYQWAIKRAFDAAKYDVLTRISTKIADLMPQSAATPEDSAGAIPNATIEP.

The protein belongs to the PlsX family. As to quaternary structure, homodimer. Probably interacts with PlsY.

Its subcellular location is the cytoplasm. It catalyses the reaction a fatty acyl-[ACP] + phosphate = an acyl phosphate + holo-[ACP]. It participates in lipid metabolism; phospholipid metabolism. In terms of biological role, catalyzes the reversible formation of acyl-phosphate (acyl-PO(4)) from acyl-[acyl-carrier-protein] (acyl-ACP). This enzyme utilizes acyl-ACP as fatty acyl donor, but not acyl-CoA. In Janthinobacterium sp. (strain Marseille) (Minibacterium massiliensis), this protein is Phosphate acyltransferase.